Reading from the N-terminus, the 414-residue chain is Proton/glutamate-aspartate symporter (414 aa).

The Cytoplasmic segment spans residues 1 to 3; sequence MKK. A helical membrane pass occupies residues 4 to 24; sequence LIAFQILIALAVGAVIGHFFP. Residues 25-42 lie on the Extracellular side of the membrane; sequence DFGMALRPVGDGFIRLIK. A helical membrane pass occupies residues 43–63; the sequence is MIVVPIVFSTIVIGAAGSGSM. The Cytoplasmic portion of the chain corresponds to 64–73; that stretch reads KKMGSLGIKT. A helical transmembrane segment spans residues 74–94; that stretch reads IIWFEVITTLVLGLGLLLANV. At 95–144 the chain is on the extracellular side; that stretch reads LKPGVGLDLSHLAKKDIHELSGYTDKVVDFKQMILDIIPTNIIDVMARND. Residues 145-165 form a helical membrane-spanning segment; sequence LLAVIFFAILFGVAAAGIGKA. Over 166–182 the chain is Cytoplasmic; that stretch reads SEPVMKFFESTAQIMFK. Residues 183–203 traverse the membrane as a helical segment; that stretch reads LTQIVMVTAPIGVLALMAASV. Topologically, residues 204 to 219 are extracellular; the sequence is GQYGIELLLPMFKLVG. The helical transmembrane segment at 220-240 threads the bilayer; that stretch reads TVFLGLFLILFVLFPLVGLIF. Residue Gln241 is a topological domain, cytoplasmic. Residues 242–262 traverse the membrane as a helical segment; the sequence is IKYFEVLKMIWDLFLIAFSTT. The Extracellular segment spans residues 263-300; sequence STETILPQLMDRMEKYGCPKRVVSFVVPSGLSLNCDGS. Residues 301 to 321 traverse the membrane as a helical segment; it reads SLYLSVSCIFLAQAFQVDMTL. Residues 322–324 lie on the Cytoplasmic side of the membrane; the sequence is SQQ. 2 helical membrane-spanning segments follow: residues 325 to 345 and 346 to 366; these read LLMM…PSGS and LVVL…VAII. Residues 367–414 are Cytoplasmic-facing; the sequence is AGVDRVMDMARTGVNVPGHAIACIVVSKWEKAFRQKEWVSANSQTESI.

This sequence belongs to the dicarboxylate/amino acid:cation symporter (DAACS) (TC 2.A.23) family.

It localises to the cell membrane. With respect to regulation, glutamate uptake is inhibited by beta-hydroxyaspartate and cysteic acid. In terms of biological role, catalyzes the proton-dependent, binding-protein-independent transport of glutamate and aspartate. The sequence is that of Proton/glutamate-aspartate symporter from Bacillus subtilis (strain 168).